A 71-amino-acid polypeptide reads, in one-letter code: Beta-defensin 131A (71 aa).

The N-terminal stretch at 1 to 22 (MRVLFFVFGVLSLMFTVPPARS) is a signal peptide. Intrachain disulfides connect Cys29–Cys57, Cys37–Cys51, and Cys41–Cys58.

Belongs to the beta-defensin family.

It is found in the secreted. In terms of biological role, has antibacterial activity. Upon stimulation with lipoteichoic acid, promotes cytokines and chemokines production and secretion. This is Beta-defensin 131A from Pan troglodytes (Chimpanzee).